Reading from the N-terminus, the 471-residue chain is UDP-N-acetylmuramoylalanine--D-glutamate ligase (471 aa).

Residue 135–141 (GTNGKTT) coordinates ATP.

It belongs to the MurCDEF family.

It localises to the cytoplasm. It carries out the reaction UDP-N-acetyl-alpha-D-muramoyl-L-alanine + D-glutamate + ATP = UDP-N-acetyl-alpha-D-muramoyl-L-alanyl-D-glutamate + ADP + phosphate + H(+). Its pathway is cell wall biogenesis; peptidoglycan biosynthesis. Its function is as follows. Cell wall formation. Catalyzes the addition of glutamate to the nucleotide precursor UDP-N-acetylmuramoyl-L-alanine (UMA). The polypeptide is UDP-N-acetylmuramoylalanine--D-glutamate ligase (Frankia casuarinae (strain DSM 45818 / CECT 9043 / HFP020203 / CcI3)).